Consider the following 156-residue polypeptide: Ribosomal RNA large subunit methyltransferase H (156 aa).

Residues L73, G104, and 123–128 (VSSLTL) each bind S-adenosyl-L-methionine.

Belongs to the RNA methyltransferase RlmH family. In terms of assembly, homodimer.

It is found in the cytoplasm. The enzyme catalyses pseudouridine(1915) in 23S rRNA + S-adenosyl-L-methionine = N(3)-methylpseudouridine(1915) in 23S rRNA + S-adenosyl-L-homocysteine + H(+). In terms of biological role, specifically methylates the pseudouridine at position 1915 (m3Psi1915) in 23S rRNA. This Paraburkholderia xenovorans (strain LB400) protein is Ribosomal RNA large subunit methyltransferase H.